The chain runs to 377 residues: Succinyl-diaminopimelate desuccinylase (377 aa).

Histidine 71 contributes to the Zn(2+) binding site. Aspartate 73 is a catalytic residue. Aspartate 102 is a Zn(2+) binding site. Glutamate 132 acts as the Proton acceptor in catalysis. Zn(2+) is bound by residues glutamate 133, glutamate 161, and histidine 346.

Belongs to the peptidase M20A family. DapE subfamily. As to quaternary structure, homodimer. It depends on Zn(2+) as a cofactor. Co(2+) is required as a cofactor.

It catalyses the reaction N-succinyl-(2S,6S)-2,6-diaminopimelate + H2O = (2S,6S)-2,6-diaminopimelate + succinate. Its pathway is amino-acid biosynthesis; L-lysine biosynthesis via DAP pathway; LL-2,6-diaminopimelate from (S)-tetrahydrodipicolinate (succinylase route): step 3/3. Functionally, catalyzes the hydrolysis of N-succinyl-L,L-diaminopimelic acid (SDAP), forming succinate and LL-2,6-diaminopimelate (DAP), an intermediate involved in the bacterial biosynthesis of lysine and meso-diaminopimelic acid, an essential component of bacterial cell walls. This is Succinyl-diaminopimelate desuccinylase from Rhizorhabdus wittichii (strain DSM 6014 / CCUG 31198 / JCM 15750 / NBRC 105917 / EY 4224 / RW1) (Sphingomonas wittichii).